The sequence spans 368 residues: D-alanine--D-alanine ligase (368 aa).

Residues 151–358 (KKLLAAEGLP…YGTLVSTLVD (208 aa)) enclose the ATP-grasp domain. 179 to 234 (RSRLHLPVFVKPARGGSSIGITRVAEWAALDDAIAHARRHDPKVIVESGIAGREVE) is a binding site for ATP. Positions 313, 325, and 327 each coordinate Mg(2+).

This sequence belongs to the D-alanine--D-alanine ligase family. Requires Mg(2+) as cofactor. The cofactor is Mn(2+).

Its subcellular location is the cytoplasm. The catalysed reaction is 2 D-alanine + ATP = D-alanyl-D-alanine + ADP + phosphate + H(+). The protein operates within cell wall biogenesis; peptidoglycan biosynthesis. Cell wall formation. This Rhodococcus opacus (strain B4) protein is D-alanine--D-alanine ligase.